Consider the following 187-residue polypeptide: Peptidyl-tRNA hydrolase (187 aa).

H14 is a tRNA binding site. The active-site Proton acceptor is the H19. Residues Y62, N64, and N110 each coordinate tRNA.

It belongs to the PTH family. As to quaternary structure, monomer.

It localises to the cytoplasm. It catalyses the reaction an N-acyl-L-alpha-aminoacyl-tRNA + H2O = an N-acyl-L-amino acid + a tRNA + H(+). Hydrolyzes ribosome-free peptidyl-tRNAs (with 1 or more amino acids incorporated), which drop off the ribosome during protein synthesis, or as a result of ribosome stalling. In terms of biological role, catalyzes the release of premature peptidyl moieties from peptidyl-tRNA molecules trapped in stalled 50S ribosomal subunits, and thus maintains levels of free tRNAs and 50S ribosomes. The polypeptide is Peptidyl-tRNA hydrolase (Chlorobaculum tepidum (strain ATCC 49652 / DSM 12025 / NBRC 103806 / TLS) (Chlorobium tepidum)).